The sequence spans 713 residues: Ribosomal RNA large subunit methyltransferase K/L (713 aa).

A THUMP domain is found at 43-154 (LLYRALLWSR…RDQVMLSLDL (112 aa)).

The protein belongs to the methyltransferase superfamily. RlmKL family.

It is found in the cytoplasm. It catalyses the reaction guanosine(2445) in 23S rRNA + S-adenosyl-L-methionine = N(2)-methylguanosine(2445) in 23S rRNA + S-adenosyl-L-homocysteine + H(+). It carries out the reaction guanosine(2069) in 23S rRNA + S-adenosyl-L-methionine = N(2)-methylguanosine(2069) in 23S rRNA + S-adenosyl-L-homocysteine + H(+). Functionally, specifically methylates the guanine in position 2445 (m2G2445) and the guanine in position 2069 (m7G2069) of 23S rRNA. This is Ribosomal RNA large subunit methyltransferase K/L from Sodalis glossinidius (strain morsitans).